The chain runs to 148 residues: Sec-independent protein translocase protein TatB (148 aa).

Residues 1–21 form a helical membrane-spanning segment; the sequence is MFGISFSELLLVGLVALLVLG. The segment at 85–148 is disordered; the sequence is EPTPVEHVGE…NDTTQPPRAP (64 aa). Residues 107–148 show a composition bias toward low complexity; that stretch reads APAVAPTESAPVVAPASVEHVAQTAAPTTPAPNDTTQPPRAP.

The protein belongs to the TatB family. As to quaternary structure, the Tat system comprises two distinct complexes: a TatABC complex, containing multiple copies of TatA, TatB and TatC subunits, and a separate TatA complex, containing only TatA subunits. Substrates initially bind to the TatABC complex, which probably triggers association of the separate TatA complex to form the active translocon.

Its subcellular location is the cell inner membrane. Part of the twin-arginine translocation (Tat) system that transports large folded proteins containing a characteristic twin-arginine motif in their signal peptide across membranes. Together with TatC, TatB is part of a receptor directly interacting with Tat signal peptides. TatB may form an oligomeric binding site that transiently accommodates folded Tat precursor proteins before their translocation. This chain is Sec-independent protein translocase protein TatB, found in Pseudomonas fluorescens (strain Pf0-1).